A 422-amino-acid polypeptide reads, in one-letter code: AP-1 complex subunit mu-1-I (422 aa).

Positions 167–420 constitute an MHD domain; the sequence is KNEVFLDVIE…ITQNGEYEMR (254 aa).

The protein belongs to the adaptor complexes medium subunit family. As to quaternary structure, adaptor protein complex 1 (AP-1) is a heterotetramer composed of two large adaptins (gamma- and beta'-type subunits), a medium adaptin (mu-type subunit AP47) and a small adaptin (sigma-type subunit AP19). Interacts (via N-terminus) with kvs-4. Expressed in the cholinergic motor neuron DA9.

The protein localises to the golgi apparatus. It localises to the cytoplasmic vesicle. It is found in the clathrin-coated vesicle membrane. The protein resides in the cell projection. Its subcellular location is the dendrite. Its function is as follows. Component of the adaptor complexes which link clathrin to receptors in coated vesicles. Clathrin-associated protein complexes are believed to interact with the cytoplasmic tails of membrane proteins, leading to their selection and concentration. Required for many aspects of development and behavior, including negative regulation of vulval differentiation. Required for the dendritic localization of potassium channel kvs-4 in the cholinergic motor neuron DA9. This chain is AP-1 complex subunit mu-1-I (unc-101), found in Caenorhabditis elegans.